Consider the following 290-residue polypeptide: Protoheme IX farnesyltransferase (290 aa).

9 helical membrane-spanning segments follow: residues 8–28, 36–56, 81–101, 108–128, 133–153, 163–183, 209–229, 230–247, and 270–290; these read LTKPGIIMGNLISVLAGYFLA, LSLLVYTMLGVALVIASGCVV, INIEFAFLFAIIMLLIGTGLL, LSAVMVLLGYVFYVFFYTMWY, VYGTLVGSVSGAIPPLVGYLA, VLLFGLFCLWQMPHSYAIAMF, IMIYVLVFSVVALGLYAFGHT, GYEYLAVVAISCYGWFKV, and LAITAFSTVLGIELLPFSITF.

It belongs to the UbiA prenyltransferase family. Protoheme IX farnesyltransferase subfamily.

It is found in the cell inner membrane. The catalysed reaction is heme b + (2E,6E)-farnesyl diphosphate + H2O = Fe(II)-heme o + diphosphate. Its pathway is porphyrin-containing compound metabolism; heme O biosynthesis; heme O from protoheme: step 1/1. Its function is as follows. Converts heme B (protoheme IX) to heme O by substitution of the vinyl group on carbon 2 of heme B porphyrin ring with a hydroxyethyl farnesyl side group. This Aliivibrio salmonicida (strain LFI1238) (Vibrio salmonicida (strain LFI1238)) protein is Protoheme IX farnesyltransferase.